The sequence spans 252 residues: Diphthine synthase (252 aa).

S-adenosyl-L-methionine is bound by residues Leu-9, Asp-85, Val-88, 113–114 (SI), Leu-165, Ala-204, and His-229.

This sequence belongs to the diphthine synthase family. In terms of assembly, homodimer.

It carries out the reaction 2-[(3S)-amino-3-carboxypropyl]-L-histidyl-[translation elongation factor 2] + 3 S-adenosyl-L-methionine = diphthine-[translation elongation factor 2] + 3 S-adenosyl-L-homocysteine + 3 H(+). Its pathway is protein modification; peptidyl-diphthamide biosynthesis. S-adenosyl-L-methionine-dependent methyltransferase that catalyzes the trimethylation of the amino group of the modified target histidine residue in translation elongation factor 2 (EF-2), to form an intermediate called diphthine. The three successive methylation reactions represent the second step of diphthamide biosynthesis. The chain is Diphthine synthase from Methanocorpusculum labreanum (strain ATCC 43576 / DSM 4855 / Z).